An 84-amino-acid polypeptide reads, in one-letter code: Small ribosomal subunit protein uS17 (84 aa).

Belongs to the universal ribosomal protein uS17 family. As to quaternary structure, part of the 30S ribosomal subunit.

Functionally, one of the primary rRNA binding proteins, it binds specifically to the 5'-end of 16S ribosomal RNA. The sequence is that of Small ribosomal subunit protein uS17 from Borrelia garinii subsp. bavariensis (strain ATCC BAA-2496 / DSM 23469 / PBi) (Borreliella bavariensis).